The chain runs to 387 residues: Acetylserotonin O-methyltransferase (387 aa).

Residues Tyr-153, Trp-170, Glu-216, 246-248 (GDF), and Arg-263 each bind S-adenosyl-L-methionine. His-266 acts as the Proton donor/acceptor in catalysis. Residues Asp-267 and Gln-317 each contribute to the substrate site. The tract at residues 354–387 (AARGGGAGARSDGGGGDATSQTGSGTGSEVGAQD) is disordered. Gly residues predominate over residues 356–370 (RGGGAGARSDGGGGD).

This sequence belongs to the class I-like SAM-binding methyltransferase superfamily. Cation-independent O-methyltransferase family. Homodimer. Expressed predominantly in the pineal gland (at protein level). Very low expression, if any, in the retina.

It catalyses the reaction N-acetylserotonin + S-adenosyl-L-methionine = melatonin + S-adenosyl-L-homocysteine + H(+). Its pathway is aromatic compound metabolism; melatonin biosynthesis; melatonin from serotonin: step 1/2. Functionally, catalyzes the transfer of a methyl group onto N-acetylserotonin, producing melatonin (N-acetyl-5-methoxytryptamine). This Mus musculus (Mouse) protein is Acetylserotonin O-methyltransferase (Asmt).